Consider the following 319-residue polypeptide: Methionyl-tRNA formyltransferase (319 aa).

113–116 (SLLP) provides a ligand contact to (6S)-5,6,7,8-tetrahydrofolate.

This sequence belongs to the Fmt family.

The enzyme catalyses L-methionyl-tRNA(fMet) + (6R)-10-formyltetrahydrofolate = N-formyl-L-methionyl-tRNA(fMet) + (6S)-5,6,7,8-tetrahydrofolate + H(+). Its function is as follows. Attaches a formyl group to the free amino group of methionyl-tRNA(fMet). The formyl group appears to play a dual role in the initiator identity of N-formylmethionyl-tRNA by promoting its recognition by IF2 and preventing the misappropriation of this tRNA by the elongation apparatus. This is Methionyl-tRNA formyltransferase from Pseudomonas fluorescens (strain Pf0-1).